We begin with the raw amino-acid sequence, 164 residues long: Cyclin-dependent kinase inhibitor 1 (164 aa).

Serine 2 carries the post-translational modification N-acetylserine. A Glycyl serine ester (Ser-Gly) (interchain with G-Cter in ubiquitin) cross-link involves residue serine 2. The C4-type zinc finger occupies 13 to 41 (CGSKACRRLFGPVDSEQLSRDCDALMAGC). Residues 17–24 (ACRRLFGP) form a required for binding cyclins region. Residues 53 to 58 (FVTETP) are required for binding CDKs. The interval 76–164 (LYLPTGPRRG…RRLIFSKRKP (89 aa)) is disordered. Phosphothreonine; by LKB1 is present on threonine 80. The residue at position 114 (serine 114) is a Phosphoserine; by GSK3-beta. Position 130 is a phosphoserine (serine 130). The PIP-box K+4 motif signature appears at 140-164 (RKRRQTSMTDFYHSKRRLIFSKRKP). The short motif at 141–156 (KRRQTSMTDFYHSKRR) is the Nuclear localization signal element. Residue threonine 145 is modified to Phosphothreonine; by PKA, PKB/AKT1, PIM1 and PIM2. Residue serine 146 is modified to Phosphoserine; by PKC and NUAK1. Residues 152–164 (HSKRRLIFSKRKP) are interaction with TRIM39. Residues 153–164 (SKRRLIFSKRKP) show a composition bias toward basic residues. Phosphoserine; by PKC; in vitro is present on serine 160.

It belongs to the CDI family. Interacts with HDAC1; the interaction is prevented by competitive binding of C10orf90/FATS to HDAC1 facilitating acetylation and protein stabilization of CDKN1A/p21. Interacts with MKRN1. Interacts with PSMA3. Interacts with PCNA. Component of the ternary complex, cyclin D-CDK4-CDKN1A. Interacts (via its N-terminal domain) with CDK4; the interaction promotes the assembly of the cyclin D-CDK4 complex, its nuclear translocation and promotes the cyclin D-dependent enzyme activity of CDK4. Binding to CDK2 leads to CDK2/cyclin E inactivation at the G1-S phase DNA damage checkpoint, thereby arresting cells at the G1-S transition during DNA repair. Interacts with PIM1. Interacts with STK11 and NUAK1. Interacts wih DTL. Interacts with isoform 1 and isoform 2 of TRIM39. Interacts with PKP3; the interaction sequesters CDKN1A to the cytoplasm thereby repressing its role as an inhibitor of CDK4- and CDK6-driven RB1 phosphorylation. In terms of processing, phosphorylation of Thr-145 by Akt or of Ser-146 by PKC impairs binding to PCNA. Phosphorylation at Ser-114 by GSK3-beta enhances ubiquitination by the DCX(DTL) complex. Phosphorylation of Thr-145 by PIM2 enhances CDKN1A stability and inhibits cell proliferation. Phosphorylation of Thr-145 by PIM1 results in the relocation of CDKN1A to the cytoplasm and enhanced CDKN1A protein stability. UV radiation-induced phosphorylation at Thr-80 by LKB1 and at Ser-146 by NUAK1 leads to its degradation. Post-translationally, ubiquitinated by MKRN1; leading to polyubiquitination and 26S proteasome-dependent degradation. Ubiquitinated by the DCX(DTL) complex, also named CRL4(CDT2) complex, leading to its degradation during S phase or following UV irradiation. Ubiquitination by the DCX(DTL) complex is essential to control replication licensing and is PCNA-dependent: interacts with PCNA via its PIP-box, while the presence of the containing the 'K+4' motif in the PIP box, recruit the DCX(DTL) complex, leading to its degradation. Ubiquitination at Ser-2 leads to degradation by the proteasome pathway. Ubiquitinated by RNF114; leading to proteasomal degradation. Acetylation leads to protein stability. Acetylated in vitro on Lys-141, Lys-154, Lys-161 and Lys-163. Deacetylation by HDAC1 is prevented by competitive binding of C10orf90/FATS to HDAC1. In terms of tissue distribution, expressed in all adult tissues, with 5-fold lower levels observed in the brain.

Its subcellular location is the cytoplasm. It is found in the nucleus. In terms of biological role, plays an important role in controlling cell cycle progression and DNA damage-induced G2 arrest. Involved in p53/TP53 mediated inhibition of cellular proliferation in response to DNA damage. Also involved in p53-independent DNA damage-induced G2 arrest mediated by CREB3L1 in astrocytes and osteoblasts. Binds to and inhibits cyclin-dependent kinase activity, preventing phosphorylation of critical cyclin-dependent kinase substrates and blocking cell cycle progression. Functions in the nuclear localization and assembly of cyclin D-CDK4 complex and promotes its kinase activity towards RB1. At higher stoichiometric ratios, inhibits the kinase activity of the cyclin D-CDK4 complex. Inhibits DNA synthesis by DNA polymerase delta by competing with POLD3 for PCNA binding. Negatively regulates the CDK4- and CDK6-driven phosphorylation of RB1 in keratinocytes, thereby resulting in the release of E2F1 and subsequent transcription of E2F1-driven G1/S phase promoting genes. The chain is Cyclin-dependent kinase inhibitor 1 from Homo sapiens (Human).